A 229-amino-acid chain; its full sequence is ATP synthase subunit a (229 aa).

6 helical membrane-spanning segments follow: residues 25–45, 82–102, 104–124, 142–162, 181–201, and 202–222; these read ADAIAYTWLIIALLLILSMLA, FFPLIATLAIFILVSNLIGLV, GFFPPTANINTTAACAVIVFV, FLGPILWLAPMMFFIEVIGHF, LVLMIFFGLAPFLVPLPMMLM, and GVLVSFIQAFVFMLLAMIYIQ.

This sequence belongs to the ATPase A chain family. F-type ATPases have 2 components, CF(1) - the catalytic core - and CF(0) - the membrane proton channel. CF(1) has five subunits: alpha(3), beta(3), gamma(1), delta(1), epsilon(1). CF(0) has three main subunits: a(1), b(2) and c(9-12). The alpha and beta chains form an alternating ring which encloses part of the gamma chain. CF(1) is attached to CF(0) by a central stalk formed by the gamma and epsilon chains, while a peripheral stalk is formed by the delta and b chains.

It is found in the cell inner membrane. In terms of biological role, key component of the proton channel; it plays a direct role in the translocation of protons across the membrane. The protein is ATP synthase subunit a of Geotalea uraniireducens (strain Rf4) (Geobacter uraniireducens).